The following is a 482-amino-acid chain: Bifunctional protein HldE (482 aa).

The interval 1-322 (MFGLESKSPK…QYIHTQPSNL (322 aa)) is ribokinase. 198–201 (NKKE) contributes to the ATP binding site. D267 is a catalytic residue. A cytidylyltransferase region spans residues 350-482 (FTNGCFDILH…IQRSKICKHS (133 aa)).

The protein in the N-terminal section; belongs to the carbohydrate kinase PfkB family. In the C-terminal section; belongs to the cytidylyltransferase family. In terms of assembly, homodimer.

It carries out the reaction D-glycero-beta-D-manno-heptose 7-phosphate + ATP = D-glycero-beta-D-manno-heptose 1,7-bisphosphate + ADP + H(+). The enzyme catalyses D-glycero-beta-D-manno-heptose 1-phosphate + ATP + H(+) = ADP-D-glycero-beta-D-manno-heptose + diphosphate. Its pathway is nucleotide-sugar biosynthesis; ADP-L-glycero-beta-D-manno-heptose biosynthesis; ADP-L-glycero-beta-D-manno-heptose from D-glycero-beta-D-manno-heptose 7-phosphate: step 1/4. It participates in nucleotide-sugar biosynthesis; ADP-L-glycero-beta-D-manno-heptose biosynthesis; ADP-L-glycero-beta-D-manno-heptose from D-glycero-beta-D-manno-heptose 7-phosphate: step 3/4. It functions in the pathway bacterial outer membrane biogenesis; LPS core biosynthesis. Catalyzes the phosphorylation of D-glycero-D-manno-heptose 7-phosphate at the C-1 position to selectively form D-glycero-beta-D-manno-heptose-1,7-bisphosphate. In terms of biological role, catalyzes the ADP transfer from ATP to D-glycero-beta-D-manno-heptose 1-phosphate, yielding ADP-D-glycero-beta-D-manno-heptose. This chain is Bifunctional protein HldE, found in Helicobacter hepaticus (strain ATCC 51449 / 3B1).